Reading from the N-terminus, the 75-residue chain is Large ribosomal subunit protein bL28 (75 aa).

It belongs to the bacterial ribosomal protein bL28 family.

The chain is Large ribosomal subunit protein bL28 from Buchnera aphidicola subsp. Acyrthosiphon pisum (strain APS) (Acyrthosiphon pisum symbiotic bacterium).